We begin with the raw amino-acid sequence, 1204 residues long: Probable cation-transporting ATPase 13A4 (1204 aa).

Over 1–32 the chain is Cytoplasmic; it reads MGENPAKSHYAQLNLGEENEMEIFGYKTQCCR. Residues 33–53 traverse the membrane as a helical segment; the sequence is KALCIAGYILSCGALLLLFYW. At 54-219 the chain is on the extracellular side; the sequence is KPEWDVWANC…FSVCLWFAED (166 aa). Residues 220 to 242 traverse the membrane as a helical segment; it reads YMEYAAAIIIMSPLSISLTVYDL. Over 243 to 397 the chain is Cytoplasmic; it reads RQQSVKLQRL…NFRLYRDALR (155 aa). Residues 398–418 traverse the membrane as a helical segment; the sequence is FLMCLIAFAAIGMIYTVCVFA. Residues 419-433 lie on the Extracellular side of the membrane; it reads LNGEEAGEVVKKALD. A helical membrane pass occupies residues 434-454; the sequence is VITIAVPPALPAALTTGIIYT. At 455–897 the chain is on the cytoplasmic side; it reads QRRLKKKGIF…REGRAALVTS (443 aa). Asp483 functions as the 4-aspartylphosphate intermediate in the catalytic mechanism. Mg(2+)-binding residues include Asp845 and Asp849. A helical transmembrane segment spans residues 898–918; sequence FCMFKYMALYSTIQYLGVLLL. At 919–929 the chain is on the extracellular side; it reads YWQLNSFGNYQ. A helical membrane pass occupies residues 930 to 950; that stretch reads FLFQDLAITTVIGMTMSFTEA. At 951–967 the chain is on the cytoplasmic side; the sequence is YPKLVPYRPPSQLVSPP. The chain crosses the membrane as a helical span at residues 968-988; it reads LLLSVILNILFSLGMQILGFL. Over 989–1043 the chain is Extracellular; it reads MVQKQPWYSKTDIHSACLSVNNHVENSSSASSLGLHGVGGGDPTEVDNGYKSYEN. A helical membrane pass occupies residues 1044–1064; sequence TTVWLLSTINCLIIALVFSKG. Topologically, residues 1065–1075 are cytoplasmic; the sequence is KPFRQPIYTNY. Residues 1076-1096 traverse the membrane as a helical segment; it reads VFIMVLVGQLGVCLFLVFADI. At 1097-1113 the chain is on the extracellular side; sequence DDLYSKMDLVCTPTTWR. Residues 1114 to 1134 form a helical membrane-spanning segment; it reads ISMVMMLAVTLAVSFLVEEAI. The Cytoplasmic portion of the chain corresponds to 1135–1204; sequence IENRALWLWL…PTFDSNEDAL (70 aa).

Belongs to the cation transport ATPase (P-type) (TC 3.A.3) family. Type V subfamily.

Its subcellular location is the membrane. It catalyses the reaction ATP + H2O = ADP + phosphate + H(+). The sequence is that of Probable cation-transporting ATPase 13A4 (ATP13A4) from Gallus gallus (Chicken).